A 479-amino-acid polypeptide reads, in one-letter code: ATP synthase subunit beta (479 aa).

153–160 is a binding site for ATP; that stretch reads GGAGVGKT.

The protein belongs to the ATPase alpha/beta chains family. In terms of assembly, F-type ATPases have 2 components, CF(1) - the catalytic core - and CF(0) - the membrane proton channel. CF(1) has five subunits: alpha(3), beta(3), gamma(1), delta(1), epsilon(1). CF(0) has three main subunits: a(1), b(2) and c(9-12). The alpha and beta chains form an alternating ring which encloses part of the gamma chain. CF(1) is attached to CF(0) by a central stalk formed by the gamma and epsilon chains, while a peripheral stalk is formed by the delta and b chains.

Its subcellular location is the cell membrane. The enzyme catalyses ATP + H2O + 4 H(+)(in) = ADP + phosphate + 5 H(+)(out). Produces ATP from ADP in the presence of a proton gradient across the membrane. The catalytic sites are hosted primarily by the beta subunits. The chain is ATP synthase subunit beta from Lactobacillus helveticus (strain DPC 4571).